The primary structure comprises 113 residues: Large ribosomal subunit protein uL22 (113 aa).

It belongs to the universal ribosomal protein uL22 family. Part of the 50S ribosomal subunit.

Its function is as follows. This protein binds specifically to 23S rRNA; its binding is stimulated by other ribosomal proteins, e.g. L4, L17, and L20. It is important during the early stages of 50S assembly. It makes multiple contacts with different domains of the 23S rRNA in the assembled 50S subunit and ribosome. The globular domain of the protein is located near the polypeptide exit tunnel on the outside of the subunit, while an extended beta-hairpin is found that lines the wall of the exit tunnel in the center of the 70S ribosome. In Oceanobacillus iheyensis (strain DSM 14371 / CIP 107618 / JCM 11309 / KCTC 3954 / HTE831), this protein is Large ribosomal subunit protein uL22.